Reading from the N-terminus, the 276-residue chain is Ribosomal RNA small subunit methyltransferase A (276 aa).

Residues N15, L17, G42, E63, D88, and N111 each contribute to the S-adenosyl-L-methionine site.

This sequence belongs to the class I-like SAM-binding methyltransferase superfamily. rRNA adenine N(6)-methyltransferase family. RsmA subfamily.

Its subcellular location is the cytoplasm. The enzyme catalyses adenosine(1518)/adenosine(1519) in 16S rRNA + 4 S-adenosyl-L-methionine = N(6)-dimethyladenosine(1518)/N(6)-dimethyladenosine(1519) in 16S rRNA + 4 S-adenosyl-L-homocysteine + 4 H(+). Its function is as follows. Specifically dimethylates two adjacent adenosines (A1518 and A1519) in the loop of a conserved hairpin near the 3'-end of 16S rRNA in the 30S particle. May play a critical role in biogenesis of 30S subunits. The protein is Ribosomal RNA small subunit methyltransferase A of Geobacter sulfurreducens (strain ATCC 51573 / DSM 12127 / PCA).